The chain runs to 137 residues: MLQPKRTKFRKQMTGHNRGLALRGSKVSFGEFALKAVARGRLTARQIESARRALTRHVKRGGKIWIRVFPDKPVTKKPLEVRMGKGKGSVEYWVAQIQPGKVLYEIEGVSEELAREAFALAAAKLPLATSFVKRTVM.

It belongs to the universal ribosomal protein uL16 family. In terms of assembly, part of the 50S ribosomal subunit.

Binds 23S rRNA and is also seen to make contacts with the A and possibly P site tRNAs. The sequence is that of Large ribosomal subunit protein uL16 from Pseudomonas entomophila (strain L48).